The following is a 96-amino-acid chain: Protein RnfH (96 aa).

The protein belongs to the UPF0125 (RnfH) family.

The chain is Protein RnfH from Shigella flexneri.